We begin with the raw amino-acid sequence, 908 residues long: MEEGGRDKTPVQSQQPSATTPSGADEKSSGKERRDAGEKDKEQELSEEDKQLQDELEMLVERLGEKDTSLYRPALEELRRQIRSSTTSMTSVPKPLKFLRPHYGKLKEIYENMAPGENKCFAADIISVLAMTMSGERECLKYRLVGSQEELASWGHEYVRHLAGEVAKEWQELDDAEKAQREPLLTLVKEIVPYNMAHNAEHEACDLLMEIEQVDMLEKDIDENAYAKVCLYLTSCVNYVPEPENSALLRCALGVFRKFSRFPEALRLALMLNDMELVEDIFTSCKDVVVQKQMAFMLGRHGVFLELSEDVEEYEDLTEIMSNVQLNSNFLALARELDIMEPKVPDDIYKTHLENNRFGGSGSQVDSARMNLASSFVNGFVNAAFGQDKLLTDDGNKWLYKNKDHGMLSAAASLGMILLWDVDGGLTQIDKYLYSSEDYIKSGALLACGIVNSGVRNECDPALALLSDYVLHNSNTMRLGSIFGLGLAYAGSNREDVLTLLLPVMGDSKSSMEVAGVTALACGMIAVGSCNGDVTSTILQTIMEKSETELKDTYARWLPLGLGLNHLGKGEAIEAILAALEVVSEPFRSFANTLVDVCAYAGSGNVLKVQQLLHICSEHFDSKEKEEDKDKKEKKDKDKKEAPADMGAHQGVAVLGIALIAMGEEIGAEMALRTFGHLLRYGEPTLRRAVPLALALISVSNPRLNILDTLSKFSHDADPEVSYNSIFAMGMVGSGTNNARLAAMLRQLAQYHAKDPNNLFMVRLAQGLTHLGKGTLTLCPYHSDRQLMSQVAVAGLLTVLVSFLDVRNIILGKSHYVLYGLVAAMQPRMLVTFDEELRPLPVSVRVGQAVDVVGQAGKPKTITGFQTHTTPVLLAHGERAELATEEFLPVTPILEGFVILRKNPNYDL.

N-acetylmethionine is present on M1. A disordered region spans residues M1–Q51. T9 and T20 each carry phosphothreonine. Polar residues predominate over residues P10–S22. Residues A24–Q51 show a composition bias toward basic and acidic residues. S29 and S147 each carry phosphoserine. The residue at position 194 (Y194) is a Phosphotyrosine. A phosphoserine mark is found at S361 and S363. 5 PC repeats span residues S409–S442, G443–L479, G480–V514, V517–K551, and L560–S589. At K551 the chain carries N6-acetyllysine. Over residues K623–P643 the composition is skewed to basic and acidic residues. The disordered stretch occupies residues K623 to D645. PC repeat units lie at residues L692–Y723 and A742–N757. Residues D708–N903 are required for interaction with UBLCP1.

The protein belongs to the proteasome subunit S2 family. As to quaternary structure, component of the 19S proteasome regulatory particle complex. The 26S proteasome consists of a 20S core particle (CP) and two 19S regulatory subunits (RP). The regulatory particle is made of a lid composed of 9 subunits, a base containing 6 ATPases and few additional components including PSMD2. Interacts with RPGRIP1L. Interacts with CRY1 in a KDM8-dependent manner. Interacts (via C-terminus) with phosphatase UBLCP1 (via ubiquitin-like domain); the interaction recruits UBLCP1 to the 19S regulatory particle where it dephosphorylates 19S subunit PSMC2/RPT1 which impairs PSMC2 ATPase activity and disrupts 26S proteasome assembly.

Functionally, component of the 26S proteasome, a multiprotein complex involved in the ATP-dependent degradation of ubiquitinated proteins. This complex plays a key role in the maintenance of protein homeostasis by removing misfolded or damaged proteins, which could impair cellular functions, and by removing proteins whose functions are no longer required. Therefore, the proteasome participates in numerous cellular processes, including cell cycle progression, apoptosis, or DNA damage repair. Its function is as follows. Binds to the intracellular domain of tumor necrosis factor type 1 receptor. The binding domain of TRAP1 and TRAP2 resides outside the death domain of TNFR1. The polypeptide is 26S proteasome non-ATPase regulatory subunit 2 (Psmd2) (Mus musculus (Mouse)).